The sequence spans 396 residues: Probable glucan endo-1,6-beta-glucosidase B (396 aa).

Residues 1–17 form the signal peptide; it reads MIRRLAAFSALSGLATA. An N-linked (GlcNAc...) asparagine glycan is attached at Asn30. Glu219 acts as the Proton donor in catalysis. An N-linked (GlcNAc...) asparagine glycan is attached at Asn272. Glu320 functions as the Nucleophile in the catalytic mechanism.

This sequence belongs to the glycosyl hydrolase 5 (cellulase A) family.

It is found in the secreted. The enzyme catalyses Random hydrolysis of (1-&gt;6)-linkages in (1-&gt;6)-beta-D-glucans.. Beta-glucanases participate in the metabolism of beta-glucan, the main structural component of the cell wall. Acts on lutean, pustulan and 1,6-oligo-beta-D-glucosides. The chain is Probable glucan endo-1,6-beta-glucosidase B (exgB) from Aspergillus fumigatus (strain CBS 144.89 / FGSC A1163 / CEA10) (Neosartorya fumigata).